The following is a 505-amino-acid chain: Maturase K (505 aa).

Belongs to the intron maturase 2 family. MatK subfamily.

The protein localises to the plastid. Its subcellular location is the chloroplast. Usually encoded in the trnK tRNA gene intron. Probably assists in splicing its own and other chloroplast group II introns. The chain is Maturase K from Beta vulgaris (Sugar beet).